We begin with the raw amino-acid sequence, 553 residues long: Keratin, type II cytoskeletal 73 (553 aa).

The interval 1 to 130 (MNRQFTCKSG…DPEIQKVRAQ (130 aa)) is head. Residues 131–166 (EREQIKALNNKFASFIDKVRFLEQQNQVLQTKWELL) are coil 1A. The 314-residue stretch at 131–444 (EREQIKALNN…KLLEGEECRM (314 aa)) folds into the IF rod domain. Residues 167 to 185 (QQLDLSNCRRNLEPVYEAH) form a linker 1 region. A coil 1B region spans residues 186–277 (ISSLQKQLDS…CLYEGEITQM (92 aa)). Residues 278–301 (QSHISDTSVVLSMDNNRNLDLDSI) are linker 12. The coil 2 stretch occupies residues 302 to 440 (IAEVRAQYED…ATYRKLLEGE (139 aa)). Residues 441–539 (ECRMSGEHTN…LGSPSKKTMR (99 aa)) form a tail region.

This sequence belongs to the intermediate filament family. In terms of assembly, heterotetramer of two type I and two type II keratins.

In terms of biological role, has a role in hair formation. Specific component of keratin intermediate filaments in the inner root sheath (IRS) of the hair follicle. This chain is Keratin, type II cytoskeletal 73 (Krt73), found in Rattus norvegicus (Rat).